The sequence spans 306 residues: TnpB-like protein aq_aa05 (306 aa).

Cys213, Cys216, Cys234, and Cys237 together coordinate Zn(2+).

Belongs to the transposase 35 family.

This chain is TnpB-like protein aq_aa05, found in Aquifex aeolicus (strain VF5).